A 398-amino-acid chain; its full sequence is cAMP-dependent protein kinase, catalytic subunit-like (398 aa).

A Protein kinase domain is found at 90 to 344 (LERIITIGKG…TQDVKDHKWF (255 aa)). ATP-binding positions include 96–104 (IGKGTFGRV) and Lys-119. Asp-213 serves as the catalytic Proton acceptor. The AGC-kinase C-terminal domain maps to 345 to 398 (EKVNWDDTLHLRVEPPIVPTLYHPGDTGNFDDYEEDTTGGPLCSQRDRDLFAEW).

Belongs to the protein kinase superfamily. Ser/Thr protein kinase family. cAMP subfamily.

It carries out the reaction L-seryl-[protein] + ATP = O-phospho-L-seryl-[protein] + ADP + H(+). It catalyses the reaction L-threonyl-[protein] + ATP = O-phospho-L-threonyl-[protein] + ADP + H(+). The polypeptide is cAMP-dependent protein kinase, catalytic subunit-like (Caenorhabditis elegans).